A 308-amino-acid chain; its full sequence is Dihydroorotate dehydrogenase A (fumarate) (308 aa).

Residues Ser24 and 48–49 contribute to the FMN site; that span reads KS. Substrate contacts are provided by residues Lys48, 72-76, and Asn132; that span reads NANGL. An FMN-binding site is contributed by Asn132. Residue Cys135 is the Nucleophile of the active site. Lys171 and Ile197 together coordinate FMN. 198-199 contacts substrate; it reads NT. FMN contacts are provided by residues Gly223 and 249–250; that span reads GG.

The protein belongs to the dihydroorotate dehydrogenase family. Type 1 subfamily. As to quaternary structure, homodimer. FMN is required as a cofactor.

It is found in the cytoplasm. The enzyme catalyses (S)-dihydroorotate + fumarate = orotate + succinate. The protein operates within pyrimidine metabolism; UMP biosynthesis via de novo pathway. Its function is as follows. Catalyzes the conversion of dihydroorotate to orotate with fumarate as the electron acceptor. The protein is Dihydroorotate dehydrogenase A (fumarate) (pyrD) of Limosilactobacillus reuteri (strain DSM 20016) (Lactobacillus reuteri).